The chain runs to 131 residues: Large ribosomal subunit protein bL12 (131 aa).

The protein belongs to the bacterial ribosomal protein bL12 family. As to quaternary structure, homodimer. Part of the ribosomal stalk of the 50S ribosomal subunit. Forms a multimeric L10(L12)X complex, where L10 forms an elongated spine to which 2 to 4 L12 dimers bind in a sequential fashion. Binds GTP-bound translation factors.

Forms part of the ribosomal stalk which helps the ribosome interact with GTP-bound translation factors. Is thus essential for accurate translation. The polypeptide is Large ribosomal subunit protein bL12 (Prochlorococcus marinus (strain MIT 9312)).